A 193-amino-acid chain; its full sequence is FMN-dependent NADH:quinone oxidoreductase 1 (193 aa).

FMN is bound by residues S9, S15–S17, and M85–F88.

This sequence belongs to the azoreductase type 1 family. In terms of assembly, homodimer. It depends on FMN as a cofactor.

The catalysed reaction is 2 a quinone + NADH + H(+) = 2 a 1,4-benzosemiquinone + NAD(+). The enzyme catalyses N,N-dimethyl-1,4-phenylenediamine + anthranilate + 2 NAD(+) = 2-(4-dimethylaminophenyl)diazenylbenzoate + 2 NADH + 2 H(+). Functionally, quinone reductase that provides resistance to thiol-specific stress caused by electrophilic quinones. Its function is as follows. Also exhibits azoreductase activity. Catalyzes the reductive cleavage of the azo bond in aromatic azo compounds to the corresponding amines. The sequence is that of FMN-dependent NADH:quinone oxidoreductase 1 from Xanthomonas axonopodis pv. citri (strain 306).